Consider the following 103-residue polypeptide: Pyrimidine/purine nucleoside phosphorylase (103 aa).

Belongs to the nucleoside phosphorylase PpnP family.

The catalysed reaction is a purine D-ribonucleoside + phosphate = a purine nucleobase + alpha-D-ribose 1-phosphate. The enzyme catalyses adenosine + phosphate = alpha-D-ribose 1-phosphate + adenine. It carries out the reaction cytidine + phosphate = cytosine + alpha-D-ribose 1-phosphate. It catalyses the reaction guanosine + phosphate = alpha-D-ribose 1-phosphate + guanine. The catalysed reaction is inosine + phosphate = alpha-D-ribose 1-phosphate + hypoxanthine. The enzyme catalyses thymidine + phosphate = 2-deoxy-alpha-D-ribose 1-phosphate + thymine. It carries out the reaction uridine + phosphate = alpha-D-ribose 1-phosphate + uracil. It catalyses the reaction xanthosine + phosphate = alpha-D-ribose 1-phosphate + xanthine. Its function is as follows. Catalyzes the phosphorolysis of diverse nucleosides, yielding D-ribose 1-phosphate and the respective free bases. Can use uridine, adenosine, guanosine, cytidine, thymidine, inosine and xanthosine as substrates. Also catalyzes the reverse reactions. This chain is Pyrimidine/purine nucleoside phosphorylase, found in Shewanella baltica (strain OS195).